A 300-amino-acid chain; its full sequence is 5'-adenylylsulfate reductase-like 5 (300 aa).

An N-terminal signal peptide occupies residues 1–23; that stretch reads MDSRVSILFVCAIAVSCFTSGSA. In terms of domain architecture, Thioredoxin spans 41 to 161; that stretch reads FDLEAKCPPS…LIEFYEEATG (121 aa). N-linked (GlcNAc...) asparagine glycosylation occurs at asparagine 136. The helical transmembrane segment at 202-222 threads the bilayer; the sequence is FLVLSLLFICLQMAILVFPIA.

The protein localises to the membrane. The protein is 5'-adenylylsulfate reductase-like 5 (APRL5) of Arabidopsis thaliana (Mouse-ear cress).